Here is a 228-residue protein sequence, read N- to C-terminus: Small ribosomal subunit protein uS3 (228 aa).

Positions 39 to 107 (TREYLQDKLK…PVHINIEEIR (69 aa)) constitute a KH type-2 domain.

It belongs to the universal ribosomal protein uS3 family. Part of the 30S ribosomal subunit. Forms a tight complex with proteins S10 and S14.

In terms of biological role, binds the lower part of the 30S subunit head. Binds mRNA in the 70S ribosome, positioning it for translation. In Pseudomonas entomophila (strain L48), this protein is Small ribosomal subunit protein uS3.